The following is a 343-amino-acid chain: MAKRQLNRRQNWRIEKIQGERAARAAKRESVTLETLEGGDLGPEQTGLVIAHFGVQVEVEAQEGEDVGKVFRCHLRANLPALVTGDRVVWRAGNQGIGVIVAQLPRTTELRRPDSRGQLKPVAANVDLIVIVFAPMPEPHANLIDRYLVAAEHAGIHPLLLLNKADLIDEQNAPALNALLAVYRTLGYPVLEVSAHQGDGMQSLQSQLDGHISVFVGQSGVGKSSLVNSLLPETDTRVGPLSEVSGQGTHTTTTARLFHFPRGGDLIDSPGIREFGLGHVSRADVEAGFIEFNDLIGTCRFRDCKHDREPGCALLKGLEDGRVQQQRMNSYRSIIASLPQDSY.

Residues 116–275 form the CP-type G domain; sequence RGQLKPVAAN…LIDSPGIREF (160 aa). Residues 163 to 166 and 217 to 225 contribute to the GTP site; these read NKAD and GQSGVGKSS. The Zn(2+) site is built by Cys-299, Cys-304, His-306, and Cys-312.

Belongs to the TRAFAC class YlqF/YawG GTPase family. RsgA subfamily. As to quaternary structure, monomer. Associates with 30S ribosomal subunit, binds 16S rRNA. It depends on Zn(2+) as a cofactor.

It localises to the cytoplasm. Its function is as follows. One of several proteins that assist in the late maturation steps of the functional core of the 30S ribosomal subunit. Helps release RbfA from mature subunits. May play a role in the assembly of ribosomal proteins into the subunit. Circularly permuted GTPase that catalyzes slow GTP hydrolysis, GTPase activity is stimulated by the 30S ribosomal subunit. This chain is Small ribosomal subunit biogenesis GTPase RsgA, found in Pseudomonas syringae pv. tomato (strain ATCC BAA-871 / DC3000).